A 208-amino-acid polypeptide reads, in one-letter code: Ribosomal RNA large subunit methyltransferase E (208 aa).

S-adenosyl-L-methionine-binding residues include glycine 62, tryptophan 64, aspartate 82, aspartate 98, and aspartate 123. The active-site Proton acceptor is the lysine 163.

The protein belongs to the class I-like SAM-binding methyltransferase superfamily. RNA methyltransferase RlmE family.

It localises to the cytoplasm. The catalysed reaction is uridine(2552) in 23S rRNA + S-adenosyl-L-methionine = 2'-O-methyluridine(2552) in 23S rRNA + S-adenosyl-L-homocysteine + H(+). Specifically methylates the uridine in position 2552 of 23S rRNA at the 2'-O position of the ribose in the fully assembled 50S ribosomal subunit. In Haemophilus ducreyi (strain 35000HP / ATCC 700724), this protein is Ribosomal RNA large subunit methyltransferase E.